The sequence spans 279 residues: Formamidopyrimidine-DNA glycosylase (279 aa).

Catalysis depends on proline 2, which acts as the Schiff-base intermediate with DNA. The active-site Proton donor is the glutamate 3. Lysine 58 functions as the Proton donor; for beta-elimination activity in the catalytic mechanism. 3 residues coordinate DNA: histidine 92, arginine 111, and arginine 153. The FPG-type zinc-finger motif lies at 238–272 (TVYGKEGQSCLSCSSTIIKTKHSGRSTFYCKTCQY). Arginine 262 acts as the Proton donor; for delta-elimination activity in catalysis.

It belongs to the FPG family. As to quaternary structure, monomer. Zn(2+) is required as a cofactor.

It carries out the reaction Hydrolysis of DNA containing ring-opened 7-methylguanine residues, releasing 2,6-diamino-4-hydroxy-5-(N-methyl)formamidopyrimidine.. The enzyme catalyses 2'-deoxyribonucleotide-(2'-deoxyribose 5'-phosphate)-2'-deoxyribonucleotide-DNA = a 3'-end 2'-deoxyribonucleotide-(2,3-dehydro-2,3-deoxyribose 5'-phosphate)-DNA + a 5'-end 5'-phospho-2'-deoxyribonucleoside-DNA + H(+). Functionally, involved in base excision repair of DNA damaged by oxidation or by mutagenic agents. Acts as a DNA glycosylase that recognizes and removes damaged bases. Has a preference for oxidized purines, such as 7,8-dihydro-8-oxoguanine (8-oxoG). Has AP (apurinic/apyrimidinic) lyase activity and introduces nicks in the DNA strand. Cleaves the DNA backbone by beta-delta elimination to generate a single-strand break at the site of the removed base with both 3'- and 5'-phosphates. The sequence is that of Formamidopyrimidine-DNA glycosylase from Rickettsia massiliae (strain Mtu5).